The chain runs to 540 residues: Chaperonin GroEL (540 aa).

ATP-binding positions include 30-33, Lys51, 87-91, Gly415, and Asp496; these read TLGP and DGTTT.

The protein belongs to the chaperonin (HSP60) family. Forms a cylinder of 14 subunits composed of two heptameric rings stacked back-to-back. Interacts with the co-chaperonin GroES.

The protein localises to the cytoplasm. The catalysed reaction is ATP + H2O + a folded polypeptide = ADP + phosphate + an unfolded polypeptide.. Functionally, together with its co-chaperonin GroES, plays an essential role in assisting protein folding. The GroEL-GroES system forms a nano-cage that allows encapsulation of the non-native substrate proteins and provides a physical environment optimized to promote and accelerate protein folding. The chain is Chaperonin GroEL from Thermodesulfovibrio yellowstonii (strain ATCC 51303 / DSM 11347 / YP87).